The sequence spans 377 residues: Tryptophan--tRNA ligase, mitochondrial (377 aa).

Residues glutamine 21 and 28 to 31 (HLGN) contribute to the ATP site. The 'HIGH' region signature appears at 22 to 31 (PTSSALHLGN). Aspartate 181 is a binding site for L-tryptophan. ATP-binding positions include 193 to 195 (GED), 242 to 246 (KMSKS), and lysine 245. The 'KMSKS' region signature appears at 242-246 (KMSKS).

It belongs to the class-I aminoacyl-tRNA synthetase family.

The protein localises to the mitochondrion matrix. The enzyme catalyses tRNA(Trp) + L-tryptophan + ATP = L-tryptophyl-tRNA(Trp) + AMP + diphosphate + H(+). The protein is Tryptophan--tRNA ligase, mitochondrial (wars2) of Dictyostelium discoideum (Social amoeba).